Reading from the N-terminus, the 142-residue chain is Midkine (142 aa).

The signal sequence occupies residues 1 to 21 (MQPRGLLLLLALLLLAAAAEA). Disulfide bonds link C36/C60, C44/C69, C51/C73, C83/C115, and C93/C125.

The protein belongs to the pleiotrophin family.

The protein resides in the cell surface. It localises to the secreted. It is found in the extracellular space. Its subcellular location is the extracellular matrix. The protein localises to the basement membrane. Has mitogenic activity, and neurite extension activity for PC12 cells. The protein is Midkine (RIHB) of Gallus gallus (Chicken).